Here is a 111-residue protein sequence, read N- to C-terminus: Nucleoid-associated protein lhv_0401 (111 aa).

The protein belongs to the YbaB/EbfC family. In terms of assembly, homodimer.

Its subcellular location is the cytoplasm. The protein resides in the nucleoid. Binds to DNA and alters its conformation. May be involved in regulation of gene expression, nucleoid organization and DNA protection. This Lactobacillus helveticus (strain DPC 4571) protein is Nucleoid-associated protein lhv_0401.